A 311-amino-acid polypeptide reads, in one-letter code: Small ribosomal subunit biogenesis GTPase RsgA (311 aa).

A CP-type G domain is found at 88 to 246 (SKEKEQVIAA…VIDTPGIREF (159 aa)). GTP contacts are provided by residues 137–140 (NKID) and 188–196 (GHSGVGKST). The Zn(2+) site is built by Cys-270, Cys-275, His-277, and Cys-283.

Belongs to the TRAFAC class YlqF/YawG GTPase family. RsgA subfamily. Monomer. Associates with 30S ribosomal subunit, binds 16S rRNA. The cofactor is Zn(2+).

It is found in the cytoplasm. Its function is as follows. One of several proteins that assist in the late maturation steps of the functional core of the 30S ribosomal subunit. Helps release RbfA from mature subunits. May play a role in the assembly of ribosomal proteins into the subunit. Circularly permuted GTPase that catalyzes slow GTP hydrolysis, GTPase activity is stimulated by the 30S ribosomal subunit. This chain is Small ribosomal subunit biogenesis GTPase RsgA, found in Chlorobaculum parvum (strain DSM 263 / NCIMB 8327) (Chlorobium vibrioforme subsp. thiosulfatophilum).